The sequence spans 285 residues: Ribosomal protein L11 methyltransferase (285 aa).

Residues threonine 131, glycine 154, aspartate 176, and asparagine 223 each contribute to the S-adenosyl-L-methionine site.

The protein belongs to the methyltransferase superfamily. PrmA family.

It localises to the cytoplasm. It catalyses the reaction L-lysyl-[protein] + 3 S-adenosyl-L-methionine = N(6),N(6),N(6)-trimethyl-L-lysyl-[protein] + 3 S-adenosyl-L-homocysteine + 3 H(+). Its function is as follows. Methylates ribosomal protein L11. This Brucella melitensis biotype 2 (strain ATCC 23457) protein is Ribosomal protein L11 methyltransferase.